The primary structure comprises 556 residues: Formate--tetrahydrofolate ligase (556 aa).

65–72 (TPAGEGKT) is a binding site for ATP.

This sequence belongs to the formate--tetrahydrofolate ligase family.

It carries out the reaction (6S)-5,6,7,8-tetrahydrofolate + formate + ATP = (6R)-10-formyltetrahydrofolate + ADP + phosphate. The protein operates within one-carbon metabolism; tetrahydrofolate interconversion. In Clostridium cylindrosporum, this protein is Formate--tetrahydrofolate ligase.